The following is a 100-amino-acid chain: Small ribosomal subunit protein uS14c (100 aa).

Belongs to the universal ribosomal protein uS14 family. In terms of assembly, part of the 30S ribosomal subunit.

The protein resides in the plastid. Binds 16S rRNA, required for the assembly of 30S particles. The chain is Small ribosomal subunit protein uS14c (rps14) from Cuscuta gronovii (Common dodder).